Consider the following 23-residue polypeptide: Hongotoxin-4 (23 aa).

The protein belongs to the short scorpion toxin superfamily. Potassium channel inhibitor family. Alpha-KTx 02 subfamily. As to expression, expressed by the venom gland.

Its subcellular location is the secreted. Potent selective inhibitor of Kv1/KCNA voltage-gated potassium channels. This is Hongotoxin-4 from Centruroides limbatus (Bark scorpion).